The chain runs to 234 residues: Proteasome subunit alpha type-2 (234 aa).

Ala2 is subject to N-acetylalanine. Position 121 is a phosphotyrosine (Tyr121).

Belongs to the peptidase T1A family. As to quaternary structure, the 26S proteasome consists of a 20S proteasome core and two 19S regulatory subunits. The 20S proteasome core is a barrel-shaped complex made of 28 subunits that are arranged in four stacked rings. The two outer rings are each formed by seven alpha subunits, and the two inner rings are formed by seven beta subunits. The proteolytic activity is exerted by three beta-subunits PSMB5, PSMB6 and PSMB7.

Its subcellular location is the cytoplasm. The protein resides in the nucleus. In terms of biological role, component of the 20S core proteasome complex involved in the proteolytic degradation of most intracellular proteins. This complex plays numerous essential roles within the cell by associating with different regulatory particles. Associated with two 19S regulatory particles, forms the 26S proteasome and thus participates in the ATP-dependent degradation of ubiquitinated proteins. The 26S proteasome plays a key role in the maintenance of protein homeostasis by removing misfolded or damaged proteins that could impair cellular functions, and by removing proteins whose functions are no longer required. Associated with the PA200 or PA28, the 20S proteasome mediates ubiquitin-independent protein degradation. This type of proteolysis is required in several pathways including spermatogenesis (20S-PA200 complex) or generation of a subset of MHC class I-presented antigenic peptides (20S-PA28 complex). The chain is Proteasome subunit alpha type-2 (psma2) from Xenopus laevis (African clawed frog).